The following is a 248-amino-acid chain: mRNA-decapping protein OPG122 (248 aa).

Residues 45–227 form the Nudix hydrolase domain; that stretch reads HKRVSVSAIL…IAKYALDTAK (183 aa). Residues 125–147 carry the Nudix box motif; the sequence is GGILKRGENVPECLSREIKEEVN. Position 132 (E132) interacts with Mg(2+). Residue E141 is the Nucleophile of the active site. Mn(2+) is bound at residue E145. Residue D167 coordinates Mg(2+).

It belongs to the Nudix hydrolase family. Mg(2+) serves as cofactor. Mn(2+) is required as a cofactor.

The protein localises to the host mitochondrion. Functionally, decapping enzyme that remove the protective 5'-cap from both host and viral mRNAs to commit transcripts for decay by the cellular exonuclease XRN1. Preferentially targets spliced mRNAs and since all viral genes are intronless, it preferentially targets host over viral transcripts. Acceleration of the turnover of cellular transcripts promotes the shutoff of host protein synthesis and therefore diminish the magnitude of antiviral response. The polypeptide is mRNA-decapping protein OPG122 (OPG122) (Variola virus (isolate Human/India/Ind3/1967) (VARV)).